The following is a 471-amino-acid chain: Heat shock 70 kDa protein 13 (471 aa).

The signal sequence occupies residues 1–22; it reads MAREMTILGSAVLTLLLAGYLA. Residues 314 to 352 form a disordered region; sequence EEQDRKEPHSSDTELPKDKLSSADDHRVNSGFGRGLSDK. Over residues 315 to 341 the composition is skewed to basic and acidic residues; the sequence is EQDRKEPHSSDTELPKDKLSSADDHRV.

It belongs to the heat shock protein 70 family. Binds UBQLN2.

Its subcellular location is the microsome. It localises to the endoplasmic reticulum. Functionally, has peptide-independent ATPase activity. This chain is Heat shock 70 kDa protein 13 (HSPA13), found in Pongo abelii (Sumatran orangutan).